The primary structure comprises 504 residues: Maturase K (504 aa).

This sequence belongs to the intron maturase 2 family. MatK subfamily.

It is found in the plastid. It localises to the chloroplast. Functionally, usually encoded in the trnK tRNA gene intron. Probably assists in splicing its own and other chloroplast group II introns. In Carpinus betulus (European hornbeam), this protein is Maturase K.